Here is a 191-residue protein sequence, read N- to C-terminus: Penicillin-binding protein activator LpoB (191 aa).

A signal peptide spans 1–16 (MKRILFVILSTMLLAS). Cysteine 17 carries N-palmitoyl cysteine lipidation. Residue cysteine 17 is the site of S-diacylglycerol cysteine attachment. The interval 25-48 (QPAPVTPVEPKEKQETTPIEPSEK) is disordered.

This sequence belongs to the LpoB family. Interacts with PBP1b.

Its subcellular location is the cell outer membrane. Regulator of peptidoglycan synthesis that is essential for the function of penicillin-binding protein 1B (PBP1b). This Xenorhabdus nematophila (strain ATCC 19061 / DSM 3370 / CCUG 14189 / LMG 1036 / NCIMB 9965 / AN6) protein is Penicillin-binding protein activator LpoB.